Consider the following 248-residue polypeptide: 3-deoxy-manno-octulosonate cytidylyltransferase (248 aa).

This sequence belongs to the KdsB family.

It is found in the cytoplasm. It carries out the reaction 3-deoxy-alpha-D-manno-oct-2-ulosonate + CTP = CMP-3-deoxy-beta-D-manno-octulosonate + diphosphate. It functions in the pathway nucleotide-sugar biosynthesis; CMP-3-deoxy-D-manno-octulosonate biosynthesis; CMP-3-deoxy-D-manno-octulosonate from 3-deoxy-D-manno-octulosonate and CTP: step 1/1. Its pathway is bacterial outer membrane biogenesis; lipopolysaccharide biosynthesis. Its function is as follows. Activates KDO (a required 8-carbon sugar) for incorporation into bacterial lipopolysaccharide in Gram-negative bacteria. The polypeptide is 3-deoxy-manno-octulosonate cytidylyltransferase (Shigella dysenteriae serotype 1 (strain Sd197)).